Here is a 133-residue protein sequence, read N- to C-terminus: Ribonuclease P protein component (133 aa).

This sequence belongs to the RnpA family. In terms of assembly, consists of a catalytic RNA component (M1 or rnpB) and a protein subunit.

It catalyses the reaction Endonucleolytic cleavage of RNA, removing 5'-extranucleotides from tRNA precursor.. In terms of biological role, RNaseP catalyzes the removal of the 5'-leader sequence from pre-tRNA to produce the mature 5'-terminus. It can also cleave other RNA substrates such as 4.5S RNA. The protein component plays an auxiliary but essential role in vivo by binding to the 5'-leader sequence and broadening the substrate specificity of the ribozyme. The protein is Ribonuclease P protein component of Pseudomonas fluorescens (strain Pf0-1).